Reading from the N-terminus, the 800-residue chain is Phenylalanine--tRNA ligase beta subunit (800 aa).

The 116-residue stretch at 39 to 154 folds into the tRNA-binding domain; the sequence is TKDIKNLVVG…EAQVPGTDAL (116 aa). In terms of domain architecture, B5 spans 408–483; the sequence is AFITPIDITA…RIYGYDDIPS (76 aa). Mg(2+)-binding residues include D461, D467, E470, and E471. An FDX-ACB domain is found at 708–800; sequence PRFPGMSRDI…ALIEQGAVIR (93 aa).

Belongs to the phenylalanyl-tRNA synthetase beta subunit family. Type 1 subfamily. In terms of assembly, tetramer of two alpha and two beta subunits. Requires Mg(2+) as cofactor.

It localises to the cytoplasm. It carries out the reaction tRNA(Phe) + L-phenylalanine + ATP = L-phenylalanyl-tRNA(Phe) + AMP + diphosphate + H(+). The protein is Phenylalanine--tRNA ligase beta subunit of Staphylococcus aureus (strain COL).